Here is a 179-residue protein sequence, read N- to C-terminus: Large ribosomal subunit protein uL6 (179 aa).

This sequence belongs to the universal ribosomal protein uL6 family. As to quaternary structure, part of the 50S ribosomal subunit.

Functionally, this protein binds to the 23S rRNA, and is important in its secondary structure. It is located near the subunit interface in the base of the L7/L12 stalk, and near the tRNA binding site of the peptidyltransferase center. In Nocardia farcinica (strain IFM 10152), this protein is Large ribosomal subunit protein uL6.